Consider the following 676-residue polypeptide: DNA ligase (676 aa).

Residues 35-39 (DNEYD), 84-85 (SL), and glutamate 115 contribute to the NAD(+) site. The active-site N6-AMP-lysine intermediate is the lysine 117. Residues arginine 138, glutamate 177, lysine 294, and lysine 318 each coordinate NAD(+). Zn(2+) is bound by residues cysteine 412, cysteine 415, cysteine 430, and cysteine 436. One can recognise a BRCT domain in the interval 595 to 676 (PTRQPLNGES…FLAFLAQYSA (82 aa)).

It belongs to the NAD-dependent DNA ligase family. LigA subfamily. Requires Mg(2+) as cofactor. Mn(2+) is required as a cofactor.

The enzyme catalyses NAD(+) + (deoxyribonucleotide)n-3'-hydroxyl + 5'-phospho-(deoxyribonucleotide)m = (deoxyribonucleotide)n+m + AMP + beta-nicotinamide D-nucleotide.. Its function is as follows. DNA ligase that catalyzes the formation of phosphodiester linkages between 5'-phosphoryl and 3'-hydroxyl groups in double-stranded DNA using NAD as a coenzyme and as the energy source for the reaction. It is essential for DNA replication and repair of damaged DNA. This Acinetobacter baylyi (strain ATCC 33305 / BD413 / ADP1) protein is DNA ligase.